The chain runs to 515 residues: MSTQLRAAEISDIIESRIEKFGIKAEERTEGTILNIKDGIVRVYGLRDVMFGEMVEFPENTYGLAFNLERDSVGAVVMGPYEHLEEGMTARCTGRILEVPVGEALLGRVVDGLGKPIDGKGPIDTSETSPIEKVAPGVITRKSVDTSLPTGLKSIDAMVPIGRGQRELIIGDRQTGKTAIAIDTIINQKHTGVKCIYVAIGQKQSSVAAVVRKLEEHGAMEHTIVVNASASEAAALQYLAPYAGCTMGEYFRDRGQDALIVYDDLTKQAWAYRQISLLLRRPPGREAYPGDIFYLHSRLLERAAHVNEAYVKEFTKGKVTGKTGSLTALPIIETQAGDVSAFIPTNVISITDGQIYLDVNLFNAGIRPAINAGLSVSRVGGAAQTKIIKKLIGGLRIALAQYRELEAFSQFASDLDEATRKQLEHGQRVMEILKQPQYQPLSVGEMAIIWYVVNNNYLDQVELKKVVDFERSLLSFLRDQHQDLLDEINKNPNYSEKIIEKIKAVVEEFVKTQSY.

171–178 (GDRQTGKT) contacts ATP.

This sequence belongs to the ATPase alpha/beta chains family. As to quaternary structure, F-type ATPases have 2 components, CF(1) - the catalytic core - and CF(0) - the membrane proton channel. CF(1) has five subunits: alpha(3), beta(3), gamma(1), delta(1), epsilon(1). CF(0) has three main subunits: a(1), b(2) and c(9-12). The alpha and beta chains form an alternating ring which encloses part of the gamma chain. CF(1) is attached to CF(0) by a central stalk formed by the gamma and epsilon chains, while a peripheral stalk is formed by the delta and b chains.

Its subcellular location is the cell inner membrane. It catalyses the reaction ATP + H2O + 4 H(+)(in) = ADP + phosphate + 5 H(+)(out). Produces ATP from ADP in the presence of a proton gradient across the membrane. The alpha chain is a regulatory subunit. In Coxiella burnetii (strain CbuK_Q154) (Coxiella burnetii (strain Q154)), this protein is ATP synthase subunit alpha.